Reading from the N-terminus, the 610-residue chain is Solute carrier family 2, facilitated glucose transporter member 12 (610 aa).

The Cytoplasmic segment spans residues 1-49 (MDAPEESIRMTSDPQSKIYVQNPDTHIHLEQGPSAKSGNGRALVLCSVS). A helical membrane pass occupies residues 50-70 (VACLSGLLMGYEMSLISGALL). Residues 71–84 (QLRDVLTLSCPEQE) lie on the Extracellular side of the membrane. A helical membrane pass occupies residues 85–105 (QVVGSLLLGAFLLSLGGGTIL). The Cytoplasmic portion of the chain corresponds to 106-118 (DHYGRRFTIILTA). The chain crosses the membrane as a helical span at residues 119-139 (LLCVLGTLLSVCVVSFWALVV). Topologically, residues 140-141 (GR) are extracellular. A helical transmembrane segment spans residues 142–162 (MLVGMSVALSGTASCLYAAEV). Over 163 to 176 (APAAWRGRCVCVYE) the chain is Cytoplasmic. A helical transmembrane segment spans residues 177–197 (LMVVLGMLLGFGLSWAFAGVP). At 198–201 (DGWR) the chain is on the extracellular side. A helical membrane pass occupies residues 202 to 222 (FTFGGALLPALLQAGVMPLLP). The Cytoplasmic portion of the chain corresponds to 223 to 286 (DSPRFLLAQQ…FQSRDNMLQR (64 aa)). The chain crosses the membrane as a helical span at residues 287–307 (LLVGAALVFLQQATGQPNILA). The Extracellular portion of the chain corresponds to 308–325 (YASTVLSSVGFHGNEAAT). The helical transmembrane segment at 326-346 (LASTGFGVVKVGGTIPAIFLV) threads the bilayer. Residues 347–353 (DKVGPKA) lie on the Cytoplasmic side of the membrane. A helical transmembrane segment spans residues 354–374 (LLCVGVVVMMLSTATLGAITM). At 375-475 (QSRTHVSSLC…LHEVSPSLKW (101 aa)) the chain is on the extracellular side. N-linked (GlcNAc...) asparagine glycans are attached at residues Asn392, Asn429, and Asn438. Residues 476 to 496 (ISLVSLLVYVAGFSISLGPMV) traverse the membrane as a helical segment. The Cytoplasmic segment spans residues 497-511 (HVVLSAIFPTGIRGK). The helical transmembrane segment at 512-532 (AVSVISAFNWATNLLISMTFL) threads the bilayer. Residues 533 to 542 (TLTERIGLPT) are Extracellular-facing. The helical transmembrane segment at 543-563 (VIFSYSAMSFLLVVFVIVFVP) threads the bilayer. The Cytoplasmic segment spans residues 564 to 610 (ETKGRSLEQISKELAMKNHLRGTLLCHRRKHKATAQPSQEEKALATV).

Belongs to the major facilitator superfamily. Sugar transporter (TC 2.A.1.1) family. Glucose transporter subfamily. As to expression, expressed in the main insulin-sensitive tissues, such as cardiac muscle, skeletal muscle and adipose tissue.

Its subcellular location is the cell membrane. The protein localises to the endomembrane system. It is found in the cytoplasm. It localises to the perinuclear region. It catalyses the reaction D-glucose(out) = D-glucose(in). Its function is as follows. Insulin-regulated facilitative glucose transporter. The polypeptide is Solute carrier family 2, facilitated glucose transporter member 12 (Danio rerio (Zebrafish)).